The sequence spans 688 residues: MAKNFLIELGTEELPPTALRSLAEAFASNFEAELKAADLAHQGVKWYATPRRLALKVAELAESQADKVVEKRGPAVSAAFDADGNPTKAAQGWARGNGITVEQADRLKTDKGEWLLHKEEVKGKPVQELVVDFAAKALAGLPIPKAMRWGNSDIQFIRPVKTLTILLGDELIEGSILGVSSARTLRGHRFMGESEFTIDSADQYPAILEERGKVMADYDARKAIILADSEKAAAAVGGKADLEDDLVEEVTSLVEWPVVLTAKFEEEFLKVPSEALVYTMKGDQKYFPVYDENKKLLPNFIFVSNIESKEPRHVIEGNEKVVRPRLADAEFFFNTDRKRPLIDRLPELEQAIFQKQLGTIKDKTDRITELAGYIAEQIGADVEKSQRAGLLAKCDLMTSMVFEFTDTQGVMGMHYATHDGEDEQVALALYEQYMPRFAGDDLPSTDISSAVAMADKLDTLVGIFGIGQAPKGSDPFALRRAALGVLRIIVEKEYNLDLVDLVAKAQSLFGDKLSNANVATDVIDFMLGRFRAWYQDEGFSVDIIQAVLARRPTKPADFDKRVKAVSHFRELDAAESLAAANKRVGNILAKFDGELAQEIDLALLQEDAEKALAEKVEILAEALEPVFAAGNYQEALSRLAELREPVDAFFDNVMVMADDEALKTNRLTLLNKLRNLFLDIADISLLQK.

Belongs to the class-II aminoacyl-tRNA synthetase family. As to quaternary structure, tetramer of two alpha and two beta subunits.

Its subcellular location is the cytoplasm. The catalysed reaction is tRNA(Gly) + glycine + ATP = glycyl-tRNA(Gly) + AMP + diphosphate. The protein is Glycine--tRNA ligase beta subunit of Aliivibrio fischeri (strain ATCC 700601 / ES114) (Vibrio fischeri).